A 330-amino-acid chain; its full sequence is MNSSTDPTSDETIWDLSPYIKIFKDGRVERLHNSPYVPPSLNDPETGVSWKDVPISSQVSARVYIPKISDHEKLPIFVYVHGAGFCLESAFRSFFHTFVKHFVAETKVIGVSIEYRLAPEHLLPAAYEDCWEALQWVASHVGLDNSGLKTAIDKDPWIINYGDFDRLYLAGDSPGANIVHNTLIRAGKEKLKGGVKILGAILYYPYFIIPTSTKLSDDFEYNYTCYWKLAYPNAPGGMNNPMINPIAENAPDLAGYGCSRLLVTLVSMISTTPDETKDINAVYIEALEKSGWKGELEVADFDADYFELFTLETEMGKNMFRRLASFIKHE.

The Involved in the stabilization of the negatively charged intermediate by the formation of the oxyanion hole signature appears at 81 to 83 (HGA). G84 serves as a coordination point for catharanthine. Catalysis depends on S173, which acts as the Proton acceptor. D274 is an active-site residue. Y305 is a catharanthine binding site. The active-site Proton donor/acceptor is the Y305.

Belongs to the 'GDXG' lipolytic enzyme family. Interacts with dehydroprecondylocarpine acetate synthase (DPAS). As to expression, expressed in leaf epidermis.

It is found in the cytoplasm. Its subcellular location is the cytosol. The protein localises to the nucleus. It catalyses the reaction dehydrosecodine = catharanthine. It functions in the pathway alkaloid biosynthesis. Functionally, component of iboga and aspidosperma monoterpenoid indole alkaloids (MIAs, e.g. tabersonine and catharanthine) biosynthesis pathway from 19E-geissoschizine, psychoactive compounds likely to be used in the treatment of opioid dependence. Catalyzes the conversion of dehydrosecodine to catharanthine. The protein is Catharanthine synthase of Catharanthus roseus (Madagascar periwinkle).